We begin with the raw amino-acid sequence, 213 residues long: Redox-sensing transcriptional repressor Rex (213 aa).

Residues 16 to 55 (IYYRYLRLLSNSGKNRVSSTELAEAVKVDSATIRRDFSYF) constitute a DNA-binding region (H-T-H motif). 90–95 (GVGNLG) is a binding site for NAD(+).

This sequence belongs to the transcriptional regulatory Rex family. As to quaternary structure, homodimer.

Its subcellular location is the cytoplasm. Modulates transcription in response to changes in cellular NADH/NAD(+) redox state. This is Redox-sensing transcriptional repressor Rex from Ligilactobacillus salivarius (strain UCC118) (Lactobacillus salivarius).